A 256-amino-acid chain; its full sequence is Gramicidin S biosynthesis protein GrsT (256 aa).

Serine 95 is a catalytic residue.

This sequence belongs to the thioesterase family.

Its pathway is antibiotic biosynthesis; gramicidin S biosynthesis. In terms of biological role, probable thioesterase involved in the biosynthesis of gramicidin S. This Aneurinibacillus migulanus (Bacillus migulanus) protein is Gramicidin S biosynthesis protein GrsT (grsT).